Consider the following 608-residue polypeptide: Cilia- and flagella-associated protein 100 (608 aa).

The span at 1-17 (MSETLSNIVSKNMTNDK) shows a compositional bias: polar residues. A disordered region spans residues 1–57 (MSETLSNIVSKNMTNDKNSLESMNISSSSSAEENPKKQAKKXKERGPDPSANPFHLS). Residues 20 to 32 (LESMNISSSSSAE) are compositionally biased toward low complexity. Coiled coils occupy residues 164 to 196 (TLDCKRREIQRLETLATKEEARLQQAEKSLAKD) and 230 to 257 (LEIRDLTTQIVNIKSEISRFEDTLQHYK). Disordered regions lie at residues 291–320 (ASKDGSVNSTPGDKGPGIKGKASSVWAKEG) and 339–377 (LSSPQQGSQPSESSGGNSRGSNSPIPLTQEDTDSDGEEP). A compositionally biased stretch (low complexity) spans 339 to 361 (LSSPQQGSQPSESSGGNSRGSNS). Coiled-coil stretches lie at residues 385–435 (QQLL…QLKQ) and 500–575 (TVQM…RGRT).

Belongs to the CFAP100 family.

It localises to the cytoplasm. It is found in the cytoskeleton. Its subcellular location is the cilium axoneme. May play a role in ciliary/flagellar motility by regulating the assembly and the activity of axonemal inner dynein arm. The protein is Cilia- and flagella-associated protein 100 of Macaca fascicularis (Crab-eating macaque).